The following is a 398-amino-acid chain: 4-hydroxy-3-methylbut-2-enyl diphosphate reductase (398 aa).

Cysteine 66 provides a ligand contact to [4Fe-4S] cluster. Histidine 96 serves as a coordination point for (2E)-4-hydroxy-3-methylbut-2-enyl diphosphate. Histidine 96 is a dimethylallyl diphosphate binding site. Histidine 96 contributes to the isopentenyl diphosphate binding site. [4Fe-4S] cluster is bound at residue cysteine 157. A (2E)-4-hydroxy-3-methylbut-2-enyl diphosphate-binding site is contributed by histidine 185. Histidine 185 contributes to the dimethylallyl diphosphate binding site. Histidine 185 is an isopentenyl diphosphate binding site. Glutamate 187 acts as the Proton donor in catalysis. Residue threonine 250 participates in (2E)-4-hydroxy-3-methylbut-2-enyl diphosphate binding. Position 288 (cysteine 288) interacts with [4Fe-4S] cluster. (2E)-4-hydroxy-3-methylbut-2-enyl diphosphate is bound by residues serine 317, serine 318, asparagine 319, and serine 380. The dimethylallyl diphosphate site is built by serine 317, serine 318, asparagine 319, and serine 380. Isopentenyl diphosphate contacts are provided by serine 317, serine 318, asparagine 319, and serine 380.

It belongs to the IspH family. [4Fe-4S] cluster is required as a cofactor.

The catalysed reaction is isopentenyl diphosphate + 2 oxidized [2Fe-2S]-[ferredoxin] + H2O = (2E)-4-hydroxy-3-methylbut-2-enyl diphosphate + 2 reduced [2Fe-2S]-[ferredoxin] + 2 H(+). It catalyses the reaction dimethylallyl diphosphate + 2 oxidized [2Fe-2S]-[ferredoxin] + H2O = (2E)-4-hydroxy-3-methylbut-2-enyl diphosphate + 2 reduced [2Fe-2S]-[ferredoxin] + 2 H(+). The protein operates within isoprenoid biosynthesis; dimethylallyl diphosphate biosynthesis; dimethylallyl diphosphate from (2E)-4-hydroxy-3-methylbutenyl diphosphate: step 1/1. Its pathway is isoprenoid biosynthesis; isopentenyl diphosphate biosynthesis via DXP pathway; isopentenyl diphosphate from 1-deoxy-D-xylulose 5-phosphate: step 6/6. Its function is as follows. Catalyzes the conversion of 1-hydroxy-2-methyl-2-(E)-butenyl 4-diphosphate (HMBPP) into a mixture of isopentenyl diphosphate (IPP) and dimethylallyl diphosphate (DMAPP). Acts in the terminal step of the DOXP/MEP pathway for isoprenoid precursor biosynthesis. In Prochlorococcus marinus subsp. pastoris (strain CCMP1986 / NIES-2087 / MED4), this protein is 4-hydroxy-3-methylbut-2-enyl diphosphate reductase.